Reading from the N-terminus, the 260-residue chain is Indole-3-glycerol phosphate synthase (260 aa).

Belongs to the TrpC family.

The catalysed reaction is 1-(2-carboxyphenylamino)-1-deoxy-D-ribulose 5-phosphate + H(+) = (1S,2R)-1-C-(indol-3-yl)glycerol 3-phosphate + CO2 + H2O. It functions in the pathway amino-acid biosynthesis; L-tryptophan biosynthesis; L-tryptophan from chorismate: step 4/5. This Staphylococcus aureus (strain MRSA252) protein is Indole-3-glycerol phosphate synthase.